The chain runs to 798 residues: Cold shock domain-containing protein E1 (798 aa).

The CSD 1 domain occupies 26–87 (ETGVIEKLLT…RTGKPIAIKL (62 aa)). An N6-acetyllysine modification is found at Lys81. Lys91 participates in a covalent cross-link: Glycyl lysine isopeptide (Lys-Gly) (interchain with G-Cter in SUMO2). Residue Ser123 is modified to Phosphoserine. The 44-residue stretch at 136–179 (VFYLTYTSEDVEGNVQLETGDKINFVIDNNKHTGAVSARNIMLL) folds into the CSD 2; truncated domain. Residues 186–245 (CQGVVCAMKEAFGFIERGDVVKEIFFHYSEFKGDLETLQPGDDVEFTIKDRNGKEVATDV) enclose the CSD 3 domain. Ser276 carries the phosphoserine modification. The region spanning 297–337 (LPFGDKDTKSKVTLLEGDHVRFNISTDRRDKLERATNIEVL) is the CSD 4; truncated domain. CSD domains follow at residues 349 to 410 (EMGV…AIRI) and 447 to 507 (NKGK…ATCV). Ser514 carries the phosphoserine modification. Positions 519-579 (LLGYVATLKD…KGNKVSAEKV (61 aa)) constitute a CSD 7 domain. A Phosphoserine modification is found at Ser584. 2 consecutive CSD domains span residues 610–670 (PTQI…AYNI) and 674–735 (RRAT…ACNV). Residues 748 to 789 (PRPDRLVNRLKNITLDDASAPRLMVLRQPRGPDNSMGFGAER) form the SUZ-C domain. Thr761 bears the Phosphothreonine mark.

Belongs to the UNR family. As to quaternary structure, component of a multi subunit autoregulatory ribonucleoprotein complex (ARC), at least composed of IGF2BP1, PABPC1 and CSDE1. Interacts with STRAP. Part of a complex associated with the FOS mCRD domain and consisting of PABPC1, PAIP1, HNRPD and SYNCRIP. The interaction with PABPC1 is direct and RNA-independent. Interacts with EIF4ENIF1/4E-T.

It localises to the cytoplasm. Its subcellular location is the stress granule. It is found in the P-body. In terms of biological role, RNA-binding protein involved in translationally coupled mRNA turnover. Implicated with other RNA-binding proteins in the cytoplasmic deadenylation/translational and decay interplay of the FOS mRNA mediated by the major coding-region determinant of instability (mCRD) domain. Required for efficient formation of stress granules. In Mus musculus (Mouse), this protein is Cold shock domain-containing protein E1.